Reading from the N-terminus, the 221-residue chain is Endo-1,4-beta-xylanase A (221 aa).

Residues 1–16 (MKFFATIAALVVGAVA) form the signal peptide. Positions 29-221 (PMLIERAGPG…GTGSASVTVS (193 aa)) constitute a GH11 domain. Catalysis depends on glutamate 114, which acts as the Nucleophile. The active-site Proton donor is the glutamate 208.

This sequence belongs to the glycosyl hydrolase 11 (cellulase G) family.

The protein resides in the secreted. It catalyses the reaction Endohydrolysis of (1-&gt;4)-beta-D-xylosidic linkages in xylans.. It functions in the pathway glycan degradation; xylan degradation. Its function is as follows. Endo-1,4-beta-xylanase involved in the hydrolysis of xylan, a major structural heterogeneous polysaccharide found in plant biomass representing the second most abundant polysaccharide in the biosphere, after cellulose. This chain is Endo-1,4-beta-xylanase A (xynA), found in Aureobasidium pullulans (Black yeast).